Consider the following 139-residue polypeptide: MHEASYALTIVDTVMEALKKEGLENVKVTKVIIKIGELSLVDPVALRNAFEAYSLGSPLEGAELEIEVVPSKFVCKRCGHEWTFKDVYPELKANIPVIHLYPHLVKDLLKCPKCNSSEVEIVQGTEFVIEGFEYQESNE.

His2 is a Ni(2+) binding site. The Zn(2+) site is built by Cys75, Cys78, Cys111, and Cys114.

It belongs to the HypA/HybF family.

In terms of biological role, involved in the maturation of [NiFe] hydrogenases. Required for nickel insertion into the metal center of the hydrogenase. The polypeptide is Hydrogenase maturation factor HypA (Ignicoccus hospitalis (strain KIN4/I / DSM 18386 / JCM 14125)).